The primary structure comprises 137 residues: Putative pumilio homolog 25 (137 aa).

2 Pumilio repeats span residues 70-105 (EFDSYFENLVKDRVGNYVVQRLIWGFKRTGIDLPHS) and 108-137 (SVLVTRSIHLCKHRYGYQVIEAFDRSTRLA).

It localises to the cytoplasm. Its function is as follows. Sequence-specific RNA-binding protein that regulates translation and mRNA stability by binding the 3'-UTR of target mRNAs. This Arabidopsis thaliana (Mouse-ear cress) protein is Putative pumilio homolog 25 (APUM25).